The following is a 365-amino-acid chain: Chorismate synthase (365 aa).

NADP(+)-binding residues include Arg48 and Arg54. FMN-binding positions include Arg125–Ser127, Asn238–Ala239, Ala278, Lys293–Ser297, and Arg319.

The protein belongs to the chorismate synthase family. As to quaternary structure, homotetramer. FMNH2 is required as a cofactor.

The enzyme catalyses 5-O-(1-carboxyvinyl)-3-phosphoshikimate = chorismate + phosphate. Its pathway is metabolic intermediate biosynthesis; chorismate biosynthesis; chorismate from D-erythrose 4-phosphate and phosphoenolpyruvate: step 7/7. Catalyzes the anti-1,4-elimination of the C-3 phosphate and the C-6 proR hydrogen from 5-enolpyruvylshikimate-3-phosphate (EPSP) to yield chorismate, which is the branch point compound that serves as the starting substrate for the three terminal pathways of aromatic amino acid biosynthesis. This reaction introduces a second double bond into the aromatic ring system. The polypeptide is Chorismate synthase (Pseudoalteromonas translucida (strain TAC 125)).